The chain runs to 300 residues: 4-hydroxy-tetrahydrodipicolinate synthase (300 aa).

Threonine 55 contributes to the pyruvate binding site. Tyrosine 143 acts as the Proton donor/acceptor in catalysis. The active-site Schiff-base intermediate with substrate is the lysine 171. Isoleucine 211 contributes to the pyruvate binding site.

This sequence belongs to the DapA family. As to quaternary structure, homotetramer; dimer of dimers.

Its subcellular location is the cytoplasm. It catalyses the reaction L-aspartate 4-semialdehyde + pyruvate = (2S,4S)-4-hydroxy-2,3,4,5-tetrahydrodipicolinate + H2O + H(+). It participates in amino-acid biosynthesis; L-lysine biosynthesis via DAP pathway; (S)-tetrahydrodipicolinate from L-aspartate: step 3/4. Functionally, catalyzes the condensation of (S)-aspartate-beta-semialdehyde [(S)-ASA] and pyruvate to 4-hydroxy-tetrahydrodipicolinate (HTPA). The sequence is that of 4-hydroxy-tetrahydrodipicolinate synthase from Mycolicibacterium paratuberculosis (strain ATCC BAA-968 / K-10) (Mycobacterium paratuberculosis).